Consider the following 330-residue polypeptide: Solute-binding protein NAS141_03721 (330 aa).

A signal peptide spans 1–27; sequence MSFFTKTAQLVSGAAVAATLFTATAQA. Residues glutamate 75, asparagine 97, arginine 153, arginine 173, tyrosine 196, 213 to 214, and arginine 240 contribute to the alpha-D-mannuronate site; that span reads NE. Alpha-D-taluronate is bound by residues glutamate 75, asparagine 97, arginine 153, arginine 173, tyrosine 196, 213–214, and arginine 240; that span reads NE.

This sequence belongs to the bacterial solute-binding protein 7 family. The complex is comprised of an extracytoplasmic solute-binding protein and a heteromeric permease formed by two transmembrane proteins.

It localises to the periplasm. Solute-binding protein that binds D-mannuronate and D-taluronate (in vitro). Probably part of a tripartite ATP-independent periplasmic (TRAP) transport system that mediates solute transport into the cytoplasm. The chain is Solute-binding protein NAS141_03721 from Sulfitobacter sp. (strain NAS-14.1).